A 788-amino-acid polypeptide reads, in one-letter code: Ribonucleoside-diphosphate reductase subunit alpha (788 aa).

Positions 2–92 constitute an ATP-cone domain; it reads ITVVKRNGRI…LYDLYHKVSG (91 aa). Residues lysine 6, 12–18, and threonine 52 contribute to the ATP site; that span reads EPLDITK. A GDP-binding site is contributed by threonine 200. Cysteine 216 and cysteine 497 are oxidised to a cystine. Residues 223 to 225 and arginine 253 contribute to the dTTP site; that span reads DNI. Asparagine 424 serves as a coordination point for GDP. Asparagine 424 functions as the Proton acceptor in the catalytic mechanism. Cysteine 426 functions as the Cysteine radical intermediate in the catalytic mechanism. GDP contacts are provided by residues glutamate 428 and 661–663; that span reads SSI. The active-site Proton acceptor is the glutamate 428.

Belongs to the ribonucleoside diphosphate reductase large chain family. In terms of assembly, tetramer of two alpha and two beta subunits.

The catalysed reaction is a 2'-deoxyribonucleoside 5'-diphosphate + [thioredoxin]-disulfide + H2O = a ribonucleoside 5'-diphosphate + [thioredoxin]-dithiol. Its activity is regulated as follows. Under complex allosteric control mediated by deoxynucleoside triphosphates and ATP binding to separate specificity and activation sites on the alpha subunit. The type of nucleotide bound at the specificity site determines substrate preference. It seems probable that ATP makes the enzyme reduce CDP and UDP, dGTP favors ADP reduction and dTTP favors GDP reduction. Stimulated by ATP and inhibited by dATP binding to the activity site. Functionally, provides the precursors necessary for DNA synthesis. Catalyzes the biosynthesis of deoxyribonucleotides from the corresponding ribonucleotides. This chain is Ribonucleoside-diphosphate reductase subunit alpha (nrdA), found in Helicobacter pylori (strain J99 / ATCC 700824) (Campylobacter pylori J99).